We begin with the raw amino-acid sequence, 987 residues long: ATP-dependent 6-phosphofructokinase subunit alpha (987 aa).

Residues 1 to 580 form an N-terminal catalytic PFK domain 1 region; that stretch reads MQSQDSCYGV…LYENFLSTTV (580 aa). Ser3 is subject to Phosphoserine. Residue Lys89 forms a Glycyl lysine isopeptide (Lys-Gly) (interchain with G-Cter in ubiquitin) linkage. Phosphoserine occurs at positions 166, 179, 185, 189, and 192. Gly215 provides a ligand contact to ATP. Residue Ser217 is modified to Phosphoserine. ATP is bound by residues 278–279 and 308–311; these read RS and GDGS. Mg(2+) is bound at residue Asp309. Beta-D-fructose 6-phosphate is bound by residues 354-356, Arg391, and 398-400; these read SID and MGR. Residue Asp356 is the Proton acceptor of the active site. A Phosphothreonine modification is found at Thr450. Residues Glu455, Lys482, and 488-491 each bind beta-D-fructose 6-phosphate; that span reads HVQR. Residues 581 to 594 are interdomain linker; the sequence is KDDGSELLPVSDRL. Residues 595–987 form a C-terminal regulatory PFK domain 2 region; it reads NIGIVHVGAP…EVAALAAENK (393 aa). Lys625 is covalently cross-linked (Glycyl lysine isopeptide (Lys-Gly) (interchain with G-Cter in ubiquitin)). Beta-D-fructose 2,6-bisphosphate-binding positions include Arg665, 722–726, Arg760, 767–769, Glu827, Arg853, 859–862, and Arg952; these read TVSNN, QGG, and HVQQ.

The protein belongs to the phosphofructokinase type A (PFKA) family. ATP-dependent PFK group I subfamily. Eukaryotic two domain clade 'E' sub-subfamily. In terms of assembly, heterooctamer of 4 alpha and 4 beta chains. Mg(2+) is required as a cofactor.

The protein localises to the cytoplasm. It localises to the mitochondrion outer membrane. It catalyses the reaction beta-D-fructose 6-phosphate + ATP = beta-D-fructose 1,6-bisphosphate + ADP + H(+). It functions in the pathway carbohydrate degradation; glycolysis; D-glyceraldehyde 3-phosphate and glycerone phosphate from D-glucose: step 3/4. With respect to regulation, allosterically activated by ADP, AMP, or fructose 2,6-bisphosphate, and allosterically inhibited by ATP or citrate. Its function is as follows. Catalyzes the phosphorylation of D-fructose 6-phosphate to fructose 1,6-bisphosphate by ATP, the first committing step of glycolysis. The protein is ATP-dependent 6-phosphofructokinase subunit alpha (PFK1) of Saccharomyces cerevisiae (strain ATCC 204508 / S288c) (Baker's yeast).